The sequence spans 365 residues: tRNA N6-adenosine threonylcarbamoyltransferase (365 aa).

Residues H119 and H123 each contribute to the Fe cation site. Residues 141 to 145, D174, G187, and N288 each bind substrate; that span reads LVSGG. Fe cation is bound at residue D316.

This sequence belongs to the KAE1 / TsaD family. The cofactor is Fe(2+).

Its subcellular location is the cytoplasm. It carries out the reaction L-threonylcarbamoyladenylate + adenosine(37) in tRNA = N(6)-L-threonylcarbamoyladenosine(37) in tRNA + AMP + H(+). Functionally, required for the formation of a threonylcarbamoyl group on adenosine at position 37 (t(6)A37) in tRNAs that read codons beginning with adenine. Is involved in the transfer of the threonylcarbamoyl moiety of threonylcarbamoyl-AMP (TC-AMP) to the N6 group of A37, together with TsaE and TsaB. TsaD likely plays a direct catalytic role in this reaction. In Rhizobium johnstonii (strain DSM 114642 / LMG 32736 / 3841) (Rhizobium leguminosarum bv. viciae), this protein is tRNA N6-adenosine threonylcarbamoyltransferase.